A 360-amino-acid polypeptide reads, in one-letter code: MDYDRYKLFVGGIAKETSEEALKQYFSRYGAVLEAVVAKEKVTGKPRGFGFVRFANDCDVVKALRDTHFILGKPVDVRKAIRKHELYQQPFSMQFLERKVQQMNGGLREMSSNGVTSRTKKIFVGGLSSNTTEEEFKSYFERFGRTTDVVVMHDGVTNRPRGFGFVTYDSEDSVEVVMQSNFHELSDKRVEVKRAIPKEGIQSNNGNAVNIPPSYSSFQATPYVPEQNGYGMVLQFPPPVFGYHHNVQAVQYPYGYQFTAQVANVSWNNPIMQPTGFYCAPPHPTPPPTNNLGYIQYMNGFDLSGTNISGYNPLAWPVTGDAAGALIHQFVDLKLDVHSQAHQRMNGGNMGIPLQNGTYI.

The region spanning 6–82 is the RRM 1 domain; the sequence is YKLFVGGIAK…KPVDVRKAIR (77 aa). A coiled-coil region spans residues 93-113; sequence MQFLERKVQQMNGGLREMSSN. The region spanning 120–197 is the RRM 2 domain; the sequence is KKIFVGGLSS…KRVEVKRAIP (78 aa).

Highly expressed in inflorescences and roots. Detected in leaves and seedlings, but not in stems. Expressed in vegetative shoot apex and root meristem, but not in root cap. Detected in flower buds, junction of pedicels, joints of immature siliques and pistil.

Functionally, RNA binding protein. Can also bind in vitro to single-stranded DNA. This is RNA-binding protein 1 (RBP1) from Arabidopsis thaliana (Mouse-ear cress).